Reading from the N-terminus, the 404-residue chain is Sorting nexin-5 (404 aa).

An N-acetylalanine modification is found at A2. Positions 25–172 (LNVDPSLQID…HVFLEYDQDL (148 aa)) constitute a PX domain. A 1,2-diacyl-sn-glycero-3-phospho-(1D-myo-inositol-4,5-bisphosphate)-binding positions include 40–46 (SERDKVK), 99–105 (FDGPREK), and 113–116 (EGSM). Residues 169 to 261 (DQDLSVRRKN…HSLALEEPTV (93 aa)) form an interaction with DOCK1 region. The membrane-binding amphipathic helix stretch occupies residues 183–200 (FGGFFKSVVKSADEVLFT). At S193 the chain carries Phosphoserine. The region spanning 202–404 (VKEVDDFFEQ…QSCIDLFKNN (203 aa)) is the BAR domain. K275 is modified (N6-acetyllysine).

Belongs to the sorting nexin family. As to quaternary structure, forms heterodimers with BAR domain-containing sorting nexins SNX1 and SNX2; does not homodimerize. The heterodimers are proposed to self-assemble into helical arrays on the membrane to stabilize and expand local membrane curvature underlying endosomal tubule formation. Thought to be a component of the originally described retromer complex (also called SNX-BAR retromer) which is a pentamer containing the heterotrimeric retromer cargo-selective complex (CSC), also described as vacuolar protein sorting subcomplex (VPS), and a heterodimeric membrane-deforming subcomplex formed between SNX1 or SNX2 and SNX5 or SNX6 (also called SNX-BAR subcomplex); the respective CSC and SNX-BAR subcomplexes associate with low affinity. Interacts with SNX1, SNX2, VPS26A, VPS29, VPS35, DCTN1, DOCK1, MIB1, PIP5K1C isoform 3. Interacts with HGS; increased by PIP5K1C isoform 3 kinase activity and by PtdIns(3P) and/or PtdIns(3,4)P2. In terms of assembly, (Microbial infection) Interacts with human cytomegalovirus proteins UL35 and UL35A; these interactions inhibit the ability of USP7 to form nuclear bodies.

It is found in the endosome. Its subcellular location is the early endosome. The protein localises to the early endosome membrane. It localises to the cell membrane. The protein resides in the cytoplasmic vesicle membrane. It is found in the cytoplasm. Its subcellular location is the cell projection. The protein localises to the phagocytic cup. It localises to the ruffle. Functionally, involved in several stages of intracellular trafficking. Interacts with membranes containing phosphatidylinositol 3-phosphate (PtdIns(3P)) or phosphatidylinositol 3,4-bisphosphate (PtdIns(3,4)P2). Acts in part as component of the retromer membrane-deforming SNX-BAR subcomplex. The SNX-BAR retromer mediates retrograde transport of cargo proteins from endosomes to the trans-Golgi network (TGN) and is involved in endosome-to-plasma membrane transport for cargo protein recycling. The SNX-BAR subcomplex functions to deform the donor membrane into a tubular profile called endosome-to-TGN transport carrier (ETC). Does not have in vitro vesicle-to-membrane remodeling activity. Involved in retrograde transport of lysosomal enzyme receptor IGF2R. May function as link between endosomal transport vesicles and dynactin. Plays a role in the internalization of EGFR after EGF stimulation. Involved in EGFR endosomal sorting and degradation; the function involves PIP5K1C isoform 3 and is retromer-independent. Together with PIP5K1C isoform 3 facilitates HGS interaction with ubiquitinated EGFR, which initiates EGFR sorting to intraluminal vesicles (ILVs) of the multivesicular body for subsequent lysosomal degradation. Involved in E-cadherin sorting and degradation; inhibits PIP5K1C isoform 3-mediated E-cadherin degradation. Plays a role in macropinocytosis. The protein is Sorting nexin-5 (SNX5) of Homo sapiens (Human).